The following is a 425-amino-acid chain: Tol-Pal system protein TolB (425 aa).

The N-terminal stretch at 1-22 (MRNFLYCTGVLLLLWMSTSSQA) is a signal peptide.

This sequence belongs to the TolB family. In terms of assembly, the Tol-Pal system is composed of five core proteins: the inner membrane proteins TolA, TolQ and TolR, the periplasmic protein TolB and the outer membrane protein Pal. They form a network linking the inner and outer membranes and the peptidoglycan layer.

The protein resides in the periplasm. Functionally, part of the Tol-Pal system, which plays a role in outer membrane invagination during cell division and is important for maintaining outer membrane integrity. This Nitrosomonas europaea (strain ATCC 19718 / CIP 103999 / KCTC 2705 / NBRC 14298) protein is Tol-Pal system protein TolB.